The chain runs to 346 residues: Mitogen-activated protein kinase kinase 1c (346 aa).

One can recognise a Protein kinase domain in the interval 70-332; that stretch reads LELVRFLGKG…TTDLLKHPFL (263 aa). ATP contacts are provided by residues 76–84 and Lys-99; that span reads LGKGAGGTV. The active-site Proton acceptor is the Asp-194.

The protein belongs to the protein kinase superfamily. STE Ser/Thr protein kinase family. MAP kinase kinase subfamily.

The catalysed reaction is L-seryl-[protein] + ATP = O-phospho-L-seryl-[protein] + ADP + H(+). It carries out the reaction L-threonyl-[protein] + ATP = O-phospho-L-threonyl-[protein] + ADP + H(+). It catalyses the reaction L-tyrosyl-[protein] + ATP = O-phospho-L-tyrosyl-[protein] + ADP + H(+). In terms of biological role, the CERK1, MEKK1a/b, MKK1a/b/c and MPK4a/b proteins are involved in pathogen defense. The pathway induces rapid growth inhibition, cell wall depositions and accumulation of defense-related transcripts. This protein is required for full defense response to fungal pathogen chitin. This Physcomitrium patens (Spreading-leaved earth moss) protein is Mitogen-activated protein kinase kinase 1c.